An 82-amino-acid chain; its full sequence is Translation initiation factor IF-1, chloroplastic (82 aa).

Positions 1-72 (MNKQNLIDVE…TKGRIIYRLR (72 aa)) constitute an S1-like domain.

Belongs to the IF-1 family. As to quaternary structure, component of the 30S ribosomal translation pre-initiation complex which assembles on the 30S ribosome in the order IF-2 and IF-3, IF-1 and N-formylmethionyl-tRNA(fMet); mRNA recruitment can occur at any time during PIC assembly.

It localises to the plastid. The protein localises to the chloroplast. Its function is as follows. One of the essential components for the initiation of protein synthesis. Stabilizes the binding of IF-2 and IF-3 on the 30S subunit to which N-formylmethionyl-tRNA(fMet) subsequently binds. Helps modulate mRNA selection, yielding the 30S pre-initiation complex (PIC). Upon addition of the 50S ribosomal subunit IF-1, IF-2 and IF-3 are released leaving the mature 70S translation initiation complex. The protein is Translation initiation factor IF-1, chloroplastic of Cycas taitungensis (Prince sago).